The sequence spans 222 residues: Flagellar L-ring protein (222 aa).

An N-terminal signal peptide occupies residues 1 to 21 (MQTFLYPRTWLILGLLLLGSG). Residue cysteine 22 is the site of N-palmitoyl cysteine attachment. Cysteine 22 carries the S-diacylglycerol cysteine lipid modification.

The protein belongs to the FlgH family. As to quaternary structure, the basal body constitutes a major portion of the flagellar organelle and consists of four rings (L,P,S, and M) mounted on a central rod.

The protein resides in the cell outer membrane. The protein localises to the bacterial flagellum basal body. Its function is as follows. Assembles around the rod to form the L-ring and probably protects the motor/basal body from shearing forces during rotation. The chain is Flagellar L-ring protein from Methylobacillus flagellatus (strain ATCC 51484 / DSM 6875 / VKM B-1610 / KT).